The chain runs to 286 residues: Spermidine/putrescine transport system permease protein PotB homolog (286 aa).

6 helical membrane-spanning segments follow: residues 10–30 (AVPF…WIIV), 62–82 (LWTA…FCYF), 94–114 (FVIA…LIGL), 136–156 (FGSG…MFLP), 193–213 (TAIL…VAIA), and 248–268 (GAII…IFAP). The 207-residue stretch at 58–264 (FWTSLWTATV…LITFAFYFVV (207 aa)) folds into the ABC transmembrane type-1 domain.

This sequence belongs to the binding-protein-dependent transport system permease family. CysTW subfamily.

It is found in the cell membrane. Required for the activity of the bacterial transport system of putrescine and spermidine. This Mycoplasma pneumoniae (strain ATCC 29342 / M129 / Subtype 1) (Mycoplasmoides pneumoniae) protein is Spermidine/putrescine transport system permease protein PotB homolog (potB).